Reading from the N-terminus, the 260-residue chain is Acyl-[acyl-carrier-protein]--UDP-N-acetylglucosamine O-acyltransferase (260 aa).

Belongs to the transferase hexapeptide repeat family. LpxA subfamily. In terms of assembly, homotrimer.

It localises to the cytoplasm. It carries out the reaction a (3R)-hydroxyacyl-[ACP] + UDP-N-acetyl-alpha-D-glucosamine = a UDP-3-O-[(3R)-3-hydroxyacyl]-N-acetyl-alpha-D-glucosamine + holo-[ACP]. It functions in the pathway glycolipid biosynthesis; lipid IV(A) biosynthesis; lipid IV(A) from (3R)-3-hydroxytetradecanoyl-[acyl-carrier-protein] and UDP-N-acetyl-alpha-D-glucosamine: step 1/6. Involved in the biosynthesis of lipid A, a phosphorylated glycolipid that anchors the lipopolysaccharide to the outer membrane of the cell. The sequence is that of Acyl-[acyl-carrier-protein]--UDP-N-acetylglucosamine O-acyltransferase from Aliarcobacter butzleri (strain RM4018) (Arcobacter butzleri).